The sequence spans 418 residues: Glutamyl-tRNA reductase (418 aa).

Residues 49-52, S109, 114-116, and Q120 each bind substrate; these read TCNR and EPQ. The Nucleophile role is filled by C50. Residue 189-194 coordinates NADP(+); it reads GAGETI.

This sequence belongs to the glutamyl-tRNA reductase family. In terms of assembly, homodimer.

The catalysed reaction is (S)-4-amino-5-oxopentanoate + tRNA(Glu) + NADP(+) = L-glutamyl-tRNA(Glu) + NADPH + H(+). Its pathway is porphyrin-containing compound metabolism; protoporphyrin-IX biosynthesis; 5-aminolevulinate from L-glutamyl-tRNA(Glu): step 1/2. In terms of biological role, catalyzes the NADPH-dependent reduction of glutamyl-tRNA(Glu) to glutamate 1-semialdehyde (GSA). This Pectobacterium atrosepticum (strain SCRI 1043 / ATCC BAA-672) (Erwinia carotovora subsp. atroseptica) protein is Glutamyl-tRNA reductase.